We begin with the raw amino-acid sequence, 315 residues long: WD repeat domain-containing protein 83 (315 aa).

7 WD repeats span residues 23–62, 65–104, 107–146, 151–188, 190–228, 231–272, and 275–313; these read CGQG…LLRT, GHGY…VVRK, GHAG…PEPV, EARD…LFSD, VGSP…LLGE, GHKN…LALA, and VGSG…AEDG.

Belongs to the WD repeat MORG1 family. As to quaternary structure, interacts with EGLN3/PHD3. Interacts with ERK signaling proteins MAP2K1/MEK1, MAP2K2/MEK2, LAMTOR3, ARAF/Raf-1, MAPK1/ERK2 and MAPK3/ERK1. Identified in the spliceosome C complex. Interacts with PARD6B and CRB3. Interacts strongly with GTP-bound RRAGA but not with inactive GDP-bound. Interacts with p62/SQSTM1.

It localises to the cytoplasm. The protein resides in the lysosome. The protein localises to the nucleus. Functionally, molecular scaffold protein for various multimeric protein complexes. Acts as a module in the assembly of a multicomponent scaffold for the ERK pathway, linking ERK responses to specific agonists. At low concentrations it enhances ERK activation, whereas high concentrations lead to the inhibition of ERK activation. Also involved in response to hypoxia by acting as a negative regulator of HIF1A/HIF-1-alpha via its interaction with EGLN3/PHD3. May promote degradation of HIF1A. May act by recruiting signaling complexes to a specific upstream activator. May also be involved in pre-mRNA splicing. Participates in tight junction development by regulating apico-basal polarity, a key step in tissue development and organization. Mechanistically, regulates the translocation of PAR6-aPKC from the cytoplasm to the apical surface by acting as an adapter between PARD6B AND CRB3. Also acts as a negative regulator of mTORC1 under nutrient-rich conditions by binding to the active Rag GTPases to inhibit mTORC1 localization to the lysosome and phosphorylation of downstream targets. This facilitates constitutive basal autophagy during nutrient availability. The protein is WD repeat domain-containing protein 83 (WDR83) of Homo sapiens (Human).